The primary structure comprises 394 residues: Elongation factor Tu (394 aa).

Positions 10-204 (KPHINVGTIG…FLDSYIPEPK (195 aa)) constitute a tr-type G domain. The interval 19–26 (GHVDHGKT) is G1. 19-26 (GHVDHGKT) serves as a coordination point for GTP. T26 is a Mg(2+) binding site. Positions 60–64 (GITIN) are G2. The G3 stretch occupies residues 81-84 (DCPG). Residues 81–85 (DCPGH) and 136–139 (NKCD) each bind GTP. Residues 136-139 (NKCD) are G4. Residues 174-176 (SAL) form a G5 region.

This sequence belongs to the TRAFAC class translation factor GTPase superfamily. Classic translation factor GTPase family. EF-Tu/EF-1A subfamily. Monomer.

The protein localises to the cytoplasm. It catalyses the reaction GTP + H2O = GDP + phosphate + H(+). GTP hydrolase that promotes the GTP-dependent binding of aminoacyl-tRNA to the A-site of ribosomes during protein biosynthesis. The protein is Elongation factor Tu of Buchnera aphidicola subsp. Acyrthosiphon pisum (strain 5A).